A 344-amino-acid polypeptide reads, in one-letter code: Anthranilate phosphoribosyltransferase (344 aa).

5-phospho-alpha-D-ribose 1-diphosphate contacts are provided by residues glycine 81, 84-85 (GD), serine 89, 91-94 (NIST), 109-117 (KHGNRALSS), and alanine 121. Glycine 81 contacts anthranilate. Serine 93 contributes to the Mg(2+) binding site. Asparagine 112 serves as a coordination point for anthranilate. Arginine 167 lines the anthranilate pocket. 2 residues coordinate Mg(2+): aspartate 226 and glutamate 227.

This sequence belongs to the anthranilate phosphoribosyltransferase family. As to quaternary structure, homodimer. Requires Mg(2+) as cofactor.

The catalysed reaction is N-(5-phospho-beta-D-ribosyl)anthranilate + diphosphate = 5-phospho-alpha-D-ribose 1-diphosphate + anthranilate. The protein operates within amino-acid biosynthesis; L-tryptophan biosynthesis; L-tryptophan from chorismate: step 2/5. Its function is as follows. Catalyzes the transfer of the phosphoribosyl group of 5-phosphorylribose-1-pyrophosphate (PRPP) to anthranilate to yield N-(5'-phosphoribosyl)-anthranilate (PRA). This Xanthobacter autotrophicus (strain ATCC BAA-1158 / Py2) protein is Anthranilate phosphoribosyltransferase.